A 5098-amino-acid polypeptide reads, in one-letter code: Malformin synthetase mlfA (5098 aa).

Positions 225–616 (ERHAANRPHS…CGRADTQVKL (392 aa)) are adenylation 1. In terms of domain architecture, Carrier 1 spans 756–829 (SRLEQEIQLA…EAASLAKVQE (74 aa)). Residue Ser-790 is modified to O-(pantetheine 4'-phosphoryl)serine. Residues 867-1298 (EDVFPCTTMQ…ALDSLTLLQA (432 aa)) form a condensation 1 region. The interval 1326–1715 (DGWVTRQPES…GRKDTQVKLR (390 aa)) is adenylation 2. In terms of domain architecture, Carrier 2 spans 1853–1930 (TAASELERTL…QLAAEFGEPA (78 aa)). Ser-1890 is subject to O-(pantetheine 4'-phosphoryl)serine. 2 disordered regions span residues 1930-1960 (AGQSASSASSTTEEGFTFSTPDDSSTNDGVD) and 1993-2022 (GSSSSSKTPSGSSSSSSSSSRKKKSARVVS). 2 stretches are compositionally biased toward low complexity: residues 1933 to 1957 (SASSASSTTEEGFTFSTPDDSSTND) and 1993 to 2011 (GSSSSSKTPSGSSSSSSSS). The interval 2063–2478 (EDIYPATALQ…ALSHSDRQTL (416 aa)) is condensation 2. Residues 2501 to 2893 (VRTPHAPAVC…IGRRDGQLKL (393 aa)) are adenylation 3. The Carrier 3 domain maps to 3029–3105 (RPVTAQEREM…QLMRHLSATR (77 aa)). Ser-3066 bears the O-(pantetheine 4'-phosphoryl)serine mark. Condensation regions lie at residues 3122 to 3587 (WVAL…TYDQ) and 3608 to 4027 (NIYP…EQLM). Residues 4052–4442 (HASREAVCAW…VGRKDNQIKF (391 aa)) form an adenylation 4 region. A Carrier 4 domain is found at 4576–4652 (MPSTAAERKM…DLAYRTTNLV (77 aa)). An O-(pantetheine 4'-phosphoryl)serine modification is found at Ser-4613. The condensation 5 stretch occupies residues 4689–5016 (DVLPTTSFQR…LQTIVQHQNN (328 aa)).

Belongs to the NRP synthetase family.

It participates in secondary metabolite biosynthesis. In terms of biological role, nonribosomal peptide synthetase; part of the gene cluster that mediates the biosynthesis of malformins, cyclic pentapeptides with a disulfide bond between 2 consecutive cysteins, that show potential anti-tumor as well as antimalarial and antitrypanosomal properties. The nonribosomal peptide synthetase mlfA is responsible of the formation of the cyclic pentapeptide. The malformin biosynthesis clusters in malformin-producing fungi also contain enzymes involved in the formation of the disulfide bond between the two consecutive cysteins within malformins, in addition to additional tailoring enzymes such as methyltransferases or oxidoreductases. They are also composed of up to 4 major facilitator superfamily transporters, and transcription factors probably involved in the regulation of the expression of those clusters. This is Malformin synthetase mlfA from Aspergillus homomorphus (strain CBS 101889).